The chain runs to 353 residues: Photosystem II D2 protein (353 aa).

Threonine 2 bears the N-acetylthreonine mark. Threonine 2 carries the post-translational modification Phosphothreonine. The helical transmembrane segment at 41–61 (CAYFALGGWFTGTTFVTSWYT) threads the bilayer. Histidine 118 is a chlorophyll a binding site. A helical transmembrane segment spans residues 125 to 141 (GFMLRQFELARSVQLRP). Glutamine 130 and asparagine 143 together coordinate pheophytin a. The chain crosses the membrane as a helical span at residues 153-166 (VFVSVFLIYPLGQS). Residue histidine 198 participates in chlorophyll a binding. Residues 208–228 (AALLCAIHGATVENTLFEDGD) traverse the membrane as a helical segment. A plastoquinone-binding residues include histidine 215 and phenylalanine 262. Histidine 215 serves as a coordination point for Fe cation. A Fe cation-binding site is contributed by histidine 269. The helical transmembrane segment at 279–295 (GLWMSALGVVGLALNLR) threads the bilayer.

It belongs to the reaction center PufL/M/PsbA/D family. In terms of assembly, PSII is composed of 1 copy each of membrane proteins PsbA, PsbB, PsbC, PsbD, PsbE, PsbF, PsbH, PsbI, PsbJ, PsbK, PsbL, PsbM, PsbT, PsbX, PsbY, PsbZ, Psb30/Ycf12, at least 3 peripheral proteins of the oxygen-evolving complex and a large number of cofactors. It forms dimeric complexes. The cofactor is The D1/D2 heterodimer binds P680, chlorophylls that are the primary electron donor of PSII, and subsequent electron acceptors. It shares a non-heme iron and each subunit binds pheophytin, quinone, additional chlorophylls, carotenoids and lipids. There is also a Cl(-1) ion associated with D1 and D2, which is required for oxygen evolution. The PSII complex binds additional chlorophylls, carotenoids and specific lipids..

It is found in the plastid. The protein resides in the chloroplast thylakoid membrane. The enzyme catalyses 2 a plastoquinone + 4 hnu + 2 H2O = 2 a plastoquinol + O2. Photosystem II (PSII) is a light-driven water:plastoquinone oxidoreductase that uses light energy to abstract electrons from H(2)O, generating O(2) and a proton gradient subsequently used for ATP formation. It consists of a core antenna complex that captures photons, and an electron transfer chain that converts photonic excitation into a charge separation. The D1/D2 (PsbA/PsbD) reaction center heterodimer binds P680, the primary electron donor of PSII as well as several subsequent electron acceptors. D2 is needed for assembly of a stable PSII complex. This Platanus occidentalis (Sycamore) protein is Photosystem II D2 protein.